Here is a 260-residue protein sequence, read N- to C-terminus: Thrombin-like enzyme acutobin (260 aa).

Residues 1-18 form the signal peptide; sequence MVLIRVLANLLILQLSYA. Positions 19-24 are excised as a propeptide; sequence QKSSEL. Residues 25–251 form the Peptidase S1 domain; it reads VIGGVECDIN…YNDWIRSITA (227 aa). Disulfide bonds link Cys-31–Cys-165, Cys-52–Cys-68, Cys-102–Cys-258, Cys-144–Cys-212, Cys-176–Cys-191, and Cys-202–Cys-227. His-67 functions as the Charge relay system in the catalytic mechanism. Residues Asn-101 and Asn-105 are each glycosylated (N-linked (GlcNAc...) asparagine). The Charge relay system role is filled by Asp-112. Asn-124 carries an N-linked (GlcNAc...) asparagine glycan. Ser-206 serves as the catalytic Charge relay system. An N-linked (GlcNAc...) asparagine glycan is attached at Asn-253.

It belongs to the peptidase S1 family. Snake venom subfamily. Monomer. N-glycosylated. Expressed by the venom gland.

It is found in the secreted. Its function is as follows. Thrombin-like snake venom serine protease that coagulates human fibrinogen by hydrolysis of the alpha chains (FGA). In Deinagkistrodon acutus (Hundred-pace snake), this protein is Thrombin-like enzyme acutobin.